A 149-amino-acid chain; its full sequence is Ribonuclease H (149 aa).

The RNase H type-1 domain maps to 1–142; that stretch reads MSDSVELFTD…ADQLANRGVD (142 aa). Residues Asp10, Glu48, Asp70, and Asp134 each contribute to the Mg(2+) site.

Belongs to the RNase H family. In terms of assembly, monomer. Requires Mg(2+) as cofactor.

It localises to the cytoplasm. It catalyses the reaction Endonucleolytic cleavage to 5'-phosphomonoester.. Functionally, endonuclease that specifically degrades the RNA of RNA-DNA hybrids. In Pseudomonas savastanoi pv. phaseolicola (strain 1448A / Race 6) (Pseudomonas syringae pv. phaseolicola (strain 1448A / Race 6)), this protein is Ribonuclease H.